The chain runs to 188 residues: ATP synthase subunit b (188 aa).

Residues 19 to 39 (VYVLGATIVSFLILFLFITYF) traverse the membrane as a helical segment.

The protein belongs to the ATPase B chain family. F-type ATPases have 2 components, F(1) - the catalytic core - and F(0) - the membrane proton channel. F(1) has five subunits: alpha(3), beta(3), gamma(1), delta(1), epsilon(1). F(0) has three main subunits: a(1), b(2) and c(10-14). The alpha and beta chains form an alternating ring which encloses part of the gamma chain. F(1) is attached to F(0) by a central stalk formed by the gamma and epsilon chains, while a peripheral stalk is formed by the delta and b chains.

Its subcellular location is the cell membrane. Functionally, f(1)F(0) ATP synthase produces ATP from ADP in the presence of a proton or sodium gradient. F-type ATPases consist of two structural domains, F(1) containing the extramembraneous catalytic core and F(0) containing the membrane proton channel, linked together by a central stalk and a peripheral stalk. During catalysis, ATP synthesis in the catalytic domain of F(1) is coupled via a rotary mechanism of the central stalk subunits to proton translocation. Component of the F(0) channel, it forms part of the peripheral stalk, linking F(1) to F(0). The sequence is that of ATP synthase subunit b from Mesomycoplasma hyopneumoniae (strain J / ATCC 25934 / NCTC 10110) (Mycoplasma hyopneumoniae).